A 1757-amino-acid chain; its full sequence is 1-phosphatidylinositol-3-phosphate 5-kinase FAB1A (1757 aa).

The FYVE-type zinc finger occupies 36–102 (DQSCPVCYEC…VCNYCYKQWE (67 aa)). The Zn(2+) site is built by Cys42, Cys45, Cys58, Cys61, Cys66, Cys69, Cys94, and Cys97. Disordered stretches follow at residues 125–193 (ARSV…SDNQ), 276–297 (KTRQ…CEES), 313–346 (LPPE…YLRP), and 684–709 (AEKS…NFTS). Positions 134-145 (NSSNCTIDSTAG) are enriched in polar residues. Residues 317–337 (PENEEDEREAVLSDDDGDEGD) show a composition bias toward acidic residues. Residues 1014-1087 (LQKESKEVIK…LQQMLNVVKD (74 aa)) are a coiled coil. Residues 1395 to 1719 (SFSLFDSVNL…RFRKAMTAYF (325 aa)) enclose the PIPK domain. Residues 1729-1739 (AAVVPSNSSSA) show a composition bias toward low complexity. Residues 1729 to 1757 (AAVVPSNSSSAEVKEEEEKDNPQAVGNKS) form a disordered region.

As to quaternary structure, component of the PI(3,5)P2 regulatory complex at least composed of ATG18, SAC/FIG4, FAB1 and VAC14. Mg(2+) is required as a cofactor. Mn(2+) serves as cofactor. As to expression, ubiquitous with highest expression levels in pollen, seed, and senescent leaves.

It localises to the endosome membrane. It catalyses the reaction a 1,2-diacyl-sn-glycero-3-phospho-(1D-myo-inositol-3-phosphate) + ATP = a 1,2-diacyl-sn-glycero-3-phospho-(1D-myo-inositol-3,5-bisphosphate) + ADP + H(+). Its function is as follows. The PI(3,5)P2 regulatory complex regulates both the synthesis and turnover of phosphatidylinositol 3,5-bisphosphate (PtdIns(3,5)P2). Catalyzes the phosphorylation of phosphatidylinositol 3-phosphate on the fifth hydroxyl of the myo-inositol ring, to form phosphatidylinositol 3,5-bisphosphate. Plays an important role in maintenance of endomembrane homeostasis including endocytosis, vacuole formation, and vacuolar acidification processes. Required for development of viable pollen. Might mediate recycling of auxin transporters. The protein is 1-phosphatidylinositol-3-phosphate 5-kinase FAB1A (FAB1A) of Arabidopsis thaliana (Mouse-ear cress).